Here is a 428-residue protein sequence, read N- to C-terminus: Probable RNase MJ4 (428 aa).

Positions 57, 59, 61, 62, 143, 165, and 397 each coordinate Zn(2+).

It belongs to the metallo-beta-lactamase superfamily. RNA-metabolizing metallo-beta-lactamase-like family. Zn(2+) is required as a cofactor.

In terms of biological role, probably an RNase. The sequence is that of Probable RNase MJ4 from Methanocaldococcus jannaschii (strain ATCC 43067 / DSM 2661 / JAL-1 / JCM 10045 / NBRC 100440) (Methanococcus jannaschii).